We begin with the raw amino-acid sequence, 310 residues long: tRNA dimethylallyltransferase (310 aa).

Position 13 to 20 (13 to 20) interacts with ATP; that stretch reads GPTASGKT. Residue 15 to 20 coordinates substrate; that stretch reads TASGKT. Interaction with substrate tRNA stretches follow at residues 38 to 41, 162 to 166, 243 to 248, and 276 to 283; these read DSAL, QRLSR, RCVGYR, and KRQITWLR.

This sequence belongs to the IPP transferase family. As to quaternary structure, monomer. Mg(2+) serves as cofactor.

It catalyses the reaction adenosine(37) in tRNA + dimethylallyl diphosphate = N(6)-dimethylallyladenosine(37) in tRNA + diphosphate. In terms of biological role, catalyzes the transfer of a dimethylallyl group onto the adenine at position 37 in tRNAs that read codons beginning with uridine, leading to the formation of N6-(dimethylallyl)adenosine (i(6)A). This Vibrio campbellii (strain ATCC BAA-1116) protein is tRNA dimethylallyltransferase.